A 99-amino-acid chain; its full sequence is Carboxysome shell vertex protein CcmL (99 aa).

Residues M1–D83 enclose the BMV domain.

Belongs to the CcmL/EutN family. CcmL subfamily. Homopentamer. May interact with CcmK2, this occurs at very high CcmK2 concentrations. Interacts with full-length CcmM.

It is found in the carboxysome. In terms of biological role, probably forms vertices in the carboxysome, a polyhedral inclusion where RuBisCO (ribulose bisphosphate carboxylase, rbcL-rbcS) is sequestered. Has been modeled to induce curvature upon insertion into an otherwise flat hexagonal molecular layer of CcmK subunits. In Thermosynechococcus vestitus (strain NIES-2133 / IAM M-273 / BP-1), this protein is Carboxysome shell vertex protein CcmL.